We begin with the raw amino-acid sequence, 982 residues long: Zinc finger and BTB domain-containing protein 4 (982 aa).

The BTB domain occupies 30-131 (CDVTLIAGDT…IYSARLALPG (102 aa)). K40 participates in a covalent cross-link: Glycyl lysine isopeptide (Lys-Gly) (interchain with G-Cter in SUMO2). Residues 71–103 (TGGSAPSPATTTAASSSSSSPPPASPHSSSPPR) are disordered. A compositionally biased stretch (low complexity) spans 74 to 89 (SAPSPATTTAASSSSS). Residues 165–324 (VPPAPTSMVT…CRYCEKVFAL (160 aa)) are interaction with CBFA2T3. The segment at 210 to 232 (FPCPRCGKSFIHPKRLQTHEAQC) adopts a C2H2-type 1; atypical zinc-finger fold. The tract at residues 234 to 255 (RGSNTRGSAGLGPGVSGSGGPA) is disordered. Residues 242 to 255 (AGLGPGVSGSGGPA) show a composition bias toward gly residues. C2H2-type zinc fingers lie at residues 285 to 307 (YVCA…SNVH), 313 to 335 (YPCR…EVWH), and 341 to 364 (YQCI…RAFH). A Phosphoserine modification is found at S367. Positions 404–578 (KTYSQGAPEA…QLQAPPPLCQ (175 aa)) are disordered. The segment covering 430-446 (SPQPLPPPAPEPGPPPS) has biased composition (pro residues). Residues 467 to 477 (AAGGGPAGTGG) show a composition bias toward gly residues. Low complexity-rich tracts occupy residues 478–488 (SQAASVITYTT) and 507–529 (ATPT…ATAT). K548 participates in a covalent cross-link: Glycyl lysine isopeptide (Lys-Gly) (interchain with G-Cter in SUMO2). Residues 552–565 (GLSGSGGSPTGTGR) are compositionally biased toward gly residues. Residue K590 forms a Glycyl lysine isopeptide (Lys-Gly) (interchain with G-Cter in SUMO2) linkage. Positions 591–600 (RRISETDLRP) are enriched in basic and acidic residues. 4 disordered regions span residues 591 to 700 (RRIS…ERRH), 715 to 738 (LRKH…SSTR), 759 to 839 (QRHA…GGGS), and 854 to 880 (GGSR…GDRM). The span at 604–627 (SGEEVEESEEEEEEEEEEDQEEQE) shows a compositional bias: acidic residues. Positions 628 to 637 (ESKAGGEDQL) are enriched in basic and acidic residues. C2H2-type zinc fingers lie at residues 700-722 (HRCG…QEAH) and 739-761 (FTCP…GQRH). T769 and T771 each carry phosphothreonine; by HIPK2. A compositionally biased stretch (low complexity) spans 799–820 (SSSSGEAGSGSAAAAEASESAS). Residue T953 is modified to Phosphothreonine; by HIPK2.

Interacts with HIPK2. Interacts with CBFA2T3. Interacts with ZBTB38. Phosphorylated by HIPK2. This phosphorylation reduces stability and triggers ZBTB4 protein degradation in response to DNA damage. As to expression, expressed in adult and aged myogenic satellite cells.

The protein localises to the nucleus. It localises to the chromosome. Transcriptional repressor with bimodal DNA-binding specificity. Represses transcription in a methyl-CpG-dependent manner. Binds with a higher affinity to methylated CpG dinucleotides in the consensus sequence 5'-CGCG-3' but can also bind to the non-methylated consensus sequence 5'-CTGCNA-3' also known as the consensus kaiso binding site (KBS). Can also bind specifically to a single methyl-CpG pair and can bind hemimethylated DNA but with a lower affinity compared to methylated DNA. Plays a role in postnatal myogenesis, may be involved in the regulation of satellite cells self-renewal. This chain is Zinc finger and BTB domain-containing protein 4 (Zbtb4), found in Mus musculus (Mouse).